Here is a 312-residue protein sequence, read N- to C-terminus: Mas-related G-protein coupled receptor member B3 (312 aa).

Topologically, residues 1-31 (MALRTSLITTTAPDKTSLPISICIIKFQVMN) are extracellular. Residues 32 to 52 (LLSITISPVGMVLNIIVLWFL) traverse the membrane as a helical segment. Over 53-67 (GFQICRNAFSAYILN) the chain is Cytoplasmic. The helical transmembrane segment at 68-88 (LAVADFLFLCSHSIFSFLIVC) threads the bilayer. Topologically, residues 89–106 (KLHYFLFYIRQLLDTVTM) are extracellular. Residues 107–127 (FAYVFGLSITTIISIECCLSI) traverse the membrane as a helical segment. Residues 128–140 (MWPIWYHCQRPRH) are Cytoplasmic-facing. A helical transmembrane segment spans residues 141 to 161 (TSAVICVLLWALSLLFPALQM). Over 162–180 (EKCSVLFNTFEYSWCGIIN) the chain is Extracellular. A helical membrane pass occupies residues 181–201 (IISGAWLVVLFVVLCGFSLIL). The Cytoplasmic segment spans residues 202–220 (LLRISCGSQQIPVTRLNVT). A helical membrane pass occupies residues 221 to 241 (IALRVLLLLIFGIPFGIFWIV). At 242–259 (DKWNEENFFVRACGFSHH) the chain is on the extracellular side. A helical transmembrane segment spans residues 260 to 280 (ILYVYCINICVNATIYFLVGS). Topologically, residues 281-312 (IRHGKFQKMTLKLILQRAIQGTPEEEGGERGP) are cytoplasmic.

This sequence belongs to the G-protein coupled receptor 1 family. Mas subfamily.

The protein resides in the membrane. Orphan receptor. Probably involved in the function of nociceptive neurons. May regulate nociceptor function and/or development, including the sensation or modulation of pain. The polypeptide is Mas-related G-protein coupled receptor member B3 (Mrgprb3) (Mus musculus (Mouse)).